A 597-amino-acid chain; its full sequence is Aspartate--tRNA(Asp/Asn) ligase (597 aa).

E182 contributes to the L-aspartate binding site. An aspartate region spans residues 206–209; the sequence is QLFK. R228 serves as a coordination point for L-aspartate. Residues 228-230 and Q237 each bind ATP; that span reads RDE. Position 456 (H456) interacts with L-aspartate. E490 is an ATP binding site. R497 is a binding site for L-aspartate. Residue 542–545 participates in ATP binding; that stretch reads GFDR.

This sequence belongs to the class-II aminoacyl-tRNA synthetase family. Type 1 subfamily. Homodimer.

The protein localises to the cytoplasm. It catalyses the reaction tRNA(Asx) + L-aspartate + ATP = L-aspartyl-tRNA(Asx) + AMP + diphosphate. In terms of biological role, aspartyl-tRNA synthetase with relaxed tRNA specificity since it is able to aspartylate not only its cognate tRNA(Asp) but also tRNA(Asn). Reaction proceeds in two steps: L-aspartate is first activated by ATP to form Asp-AMP and then transferred to the acceptor end of tRNA(Asp/Asn). The chain is Aspartate--tRNA(Asp/Asn) ligase from Desulfatibacillum aliphaticivorans.